Here is a 448-residue protein sequence, read N- to C-terminus: NADH oxidase (448 aa).

FAD is bound by residues 7–11 (GSGAA), Cys-42, Val-80, 110–113 (ATGA), and Arg-132. Cys-42 acts as the Redox-active in catalysis. NAD(+)-binding positions include 152–167 (VAVV…MAYG), Glu-179, and Gly-243. FAD is bound by residues 271–281 (TSIPNIYAVGD), Gly-299, and Thr-300. Val-328 contacts NAD(+). Residue Tyr-423 participates in FAD binding.

It belongs to the class-III pyridine nucleotide-disulfide oxidoreductase family. It depends on FAD as a cofactor.

The catalysed reaction is 2 NADH + O2 + 2 H(+) = 2 NAD(+) + 2 H2O. Functionally, catalyzes the four-electron reduction of molecular oxygen to water. This is NADH oxidase from Methanocaldococcus jannaschii (strain ATCC 43067 / DSM 2661 / JAL-1 / JCM 10045 / NBRC 100440) (Methanococcus jannaschii).